Reading from the N-terminus, the 858-residue chain is DNA mismatch repair protein MutS (858 aa).

613–620 (GPNMAGKS) provides a ligand contact to ATP.

It belongs to the DNA mismatch repair MutS family.

Its function is as follows. This protein is involved in the repair of mismatches in DNA. It is possible that it carries out the mismatch recognition step. This protein has a weak ATPase activity. This chain is DNA mismatch repair protein MutS, found in Dehalococcoides mccartyi (strain ATCC BAA-2266 / KCTC 15142 / 195) (Dehalococcoides ethenogenes (strain 195)).